Here is an 851-residue protein sequence, read N- to C-terminus: MSSKQEIMSDQRFRRVAKDPRFWEMPEKDRKVKIDKRFRAMFHDKKFKLNYAVDKRGRPISHSTTEDLKRFYDLSDSDSNLSGEDSKALSQKKIKKKKTQTKKEIDSKNLVEKKKETKKANHKGSENKTDLDNSIGIKKMKTSCKFKIDSNISPKKDSKEFTQKNKKEKKNIVQHTTDSSLEEKQRTLDSGTSEIVKSPRIECSKTRREMQSVVQLIMTRDSDGYENSTDGEMCDKDALEEDSESVSEIGSDEESENEITSVGRASGDDDGSEDDEEEDEDEEEDEDEDSEDDDKSDSGPDLARGKGNIETSSEDEDDTADLFPEESGFEHAWRELDKDAPRADEITRRLAVCNMDWDRLKAKDLLALFNSFKPKGGVIFSVKIYPSEFGKERMKEEQVQGPVELLSIPEDAPEKDWTSREKLRDYQFKRLKYYYAVVDCDSPETASKIYEDCDGLEFESSCSFIDLRFIPDDITFDDEPKDVASEVNLTAYKPKYFTSAAMGTSTVEITWDETDHERITMLNRKFKKEELLDMDFQAYLASSSEDEEEIEEELQGDDGVNVEEDGKTKKSQKDDEEQIAKYRQLLQVIQEKEKKGKENDMEMEIKWVPGLKESAEEMVKNKLEGKDKLTPWEQFLEKKKEKKRLKRKQKALAEEASEEELPSDVDLNDPYFAEEVKQIGINKKSVKSAKDGTSPEEEIEIERQKAEMALLMMDEDEDSKKHFNYNKIVEHQNLSKKKKKQLMKKKELIEDDFEVNVNDARFQAMYTSHLFNLDPSDPNFKKTKAMEKILEEKARQRERKEQELTQAIKKKESEIEKESQRKSIDPALSMLIKSIKTKTEQFQARKKQKVK.

The residue at position 2 (serine 2) is an N-acetylserine. Disordered stretches follow at residues 74–134, 148–328, and 542–576; these read LSDS…LDNS, IDSN…EESG, and SSSE…KDDE. Residues serine 75, serine 77, serine 79, and serine 82 each carry the phosphoserine modification. Basic residues predominate over residues 90-100; the sequence is SQKKIKKKKTQ. Positions 101 to 131 are enriched in basic and acidic residues; sequence TKKEIDSKNLVEKKKETKKANHKGSENKTDL. Phosphoserine occurs at positions 134 and 153. The segment covering 154–165 has biased composition (basic and acidic residues); it reads PKKDSKEFTQKN. A phosphoserine mark is found at serine 179, serine 180, and serine 198. The span at 197-210 shows a compositional bias: basic and acidic residues; it reads KSPRIECSKTRREM. Acidic residues-rich tracts occupy residues 238–257 and 268–295; these read ALEE…ESEN and DDDG…DDDK. Phosphoserine occurs at positions 296 and 298. Threonine 311 carries the post-translational modification Phosphothreonine. 2 positions are modified to phosphoserine: serine 312 and serine 313. 2 stretches are compositionally biased toward acidic residues: residues 312 to 324 and 544 to 563; these read SSED…DLFP and SEDE…VNVE. Positions 564–573 are enriched in basic and acidic residues; the sequence is EDGKTKKSQK. A Phosphoserine modification is found at serine 614. A compositionally biased stretch (basic residues) spans 640–650; sequence KEKKRLKRKQK. A disordered region spans residues 640–667; that stretch reads KEKKRLKRKQKALAEEASEEELPSDVDL. The span at 655 to 667 shows a compositional bias: acidic residues; sequence EASEEELPSDVDL. 2 positions are modified to phosphoserine: serine 657 and serine 663. Threonine 693 is subject to Phosphothreonine. 3 positions are modified to phosphoserine: serine 694, serine 735, and serine 823. Residues 730-824 adopt a coiled-coil conformation; sequence EHQNLSKKKK…IEKESQRKSI (95 aa). The segment covering 794–824 has biased composition (basic and acidic residues); the sequence is ARQRERKEQELTQAIKKKESEIEKESQRKSI. Positions 794–827 are disordered; it reads ARQRERKEQELTQAIKKKESEIEKESQRKSIDPA.

This sequence belongs to the ESF1 family. As to quaternary structure, interacts with ABT1. Forms a complex with ABT1 and suppresses the ABT1-induced activation of polymerase II-directed transcription in mammalian cells.

It localises to the nucleus. Its subcellular location is the nucleolus. It is found in the nucleoplasm. May constitute a novel regulatory system for basal transcription. Negatively regulates ABT1. This Homo sapiens (Human) protein is ESF1 homolog (ESF1).